A 384-amino-acid chain; its full sequence is Chaperone protein DnaJ (384 aa).

In terms of domain architecture, J spans 5–70 (DFYEVLGVSK…DKKAAYDRYG (66 aa)). A CR-type zinc finger spans residues 143–221 (GAQKTITVPG…CHGSGRIEKE (79 aa)). Zn(2+) is bound by residues C156, C159, C173, C176, C195, C198, C209, and C212. CXXCXGXG motif repeat units follow at residues 156-163 (CGSCNGTG), 173-180 (CPTCSGLG), 195-202 (CPTCGGQG), and 209-216 (CRVCHGSG).

The protein belongs to the DnaJ family. Homodimer. Zn(2+) is required as a cofactor.

It localises to the cytoplasm. Its function is as follows. Participates actively in the response to hyperosmotic and heat shock by preventing the aggregation of stress-denatured proteins and by disaggregating proteins, also in an autonomous, DnaK-independent fashion. Unfolded proteins bind initially to DnaJ; upon interaction with the DnaJ-bound protein, DnaK hydrolyzes its bound ATP, resulting in the formation of a stable complex. GrpE releases ADP from DnaK; ATP binding to DnaK triggers the release of the substrate protein, thus completing the reaction cycle. Several rounds of ATP-dependent interactions between DnaJ, DnaK and GrpE are required for fully efficient folding. Also involved, together with DnaK and GrpE, in the DNA replication of plasmids through activation of initiation proteins. The protein is Chaperone protein DnaJ of Rhodobacter capsulatus (Rhodopseudomonas capsulata).